The primary structure comprises 484 residues: Ureidoglycolate hydrolase (484 aa).

The first 28 residues, 1–28 (MATSAAARFLAALAGAAVLLVLLGGAAG), serve as a signal peptide directing secretion. Mn(2+) contacts are provided by H148, D159, E194, and H262. 2 substrate regions span residues 193–194 (EE) and 262–265 (HIEQ). The tract at residues 284–399 (APASIKVEFE…LSEFKIINQD (116 aa)) is involved in dimerization. Residues H298, N348, and R361 each contribute to the substrate site. The tract at residues 431–432 (YH) is substrate. H456 is a binding site for Mn(2+). H456 lines the substrate pocket.

The protein belongs to the peptidase M20 family. Homodimer. The cofactor is Mn(2+). It depends on Ni(2+) as a cofactor. Co(2+) serves as cofactor.

It is found in the endoplasmic reticulum. The enzyme catalyses (S)-ureidoglycolate + H2O + 2 H(+) = glyoxylate + 2 NH4(+) + CO2. The protein operates within nitrogen metabolism; (S)-allantoin degradation; glyoxylate from (S)-ureidoglycolate: step 1/1. Its function is as follows. Involved in the catabolism of purine nucleotides. The sequential activity of AAH, UGLYAH and UAH allows a complete purine breakdown without the intermediate generation of urea. The protein is Ureidoglycolate hydrolase of Oryza sativa subsp. japonica (Rice).